Reading from the N-terminus, the 109-residue chain is Non-structural protein of 12.7 kDa (109 aa).

It belongs to the coronaviruses ns12.7 protein family.

The sequence is that of Non-structural protein of 12.7 kDa from Sus scrofa (Pig).